Consider the following 471-residue polypeptide: Glutamate--tRNA ligase (471 aa).

Residues 10–20 (PSPTGYLHIGG) carry the 'HIGH' region motif. Cys107, Cys109, Cys134, and Glu136 together coordinate Zn(2+). Residues 244–248 (RLSKR) carry the 'KMSKS' region motif. Residue Lys247 participates in ATP binding.

It belongs to the class-I aminoacyl-tRNA synthetase family. Glutamate--tRNA ligase type 1 subfamily. In terms of assembly, monomer. Zn(2+) is required as a cofactor.

It localises to the cytoplasm. The catalysed reaction is tRNA(Glu) + L-glutamate + ATP = L-glutamyl-tRNA(Glu) + AMP + diphosphate. In terms of biological role, catalyzes the attachment of glutamate to tRNA(Glu) in a two-step reaction: glutamate is first activated by ATP to form Glu-AMP and then transferred to the acceptor end of tRNA(Glu). This Anaeromyxobacter sp. (strain Fw109-5) protein is Glutamate--tRNA ligase.